The primary structure comprises 396 residues: Probable peptidoglycan glycosyltransferase FtsW (396 aa).

The next 9 helical transmembrane spans lie at 17–37 (FCDG…WVMV), 61–81 (VFVL…MAWW), 83–103 (ANGP…LVAG), 117–137 (GIPL…VYLA), 159–179 (MVMA…AVVV), 198–218 (FLLL…AEPY), 274–294 (FVFA…VIGL), 316–336 (FAAY…FINI), and 350–370 (LPLL…VGML).

The protein belongs to the SEDS family. FtsW subfamily.

The protein localises to the cell inner membrane. The enzyme catalyses [GlcNAc-(1-&gt;4)-Mur2Ac(oyl-L-Ala-gamma-D-Glu-L-Lys-D-Ala-D-Ala)](n)-di-trans,octa-cis-undecaprenyl diphosphate + beta-D-GlcNAc-(1-&gt;4)-Mur2Ac(oyl-L-Ala-gamma-D-Glu-L-Lys-D-Ala-D-Ala)-di-trans,octa-cis-undecaprenyl diphosphate = [GlcNAc-(1-&gt;4)-Mur2Ac(oyl-L-Ala-gamma-D-Glu-L-Lys-D-Ala-D-Ala)](n+1)-di-trans,octa-cis-undecaprenyl diphosphate + di-trans,octa-cis-undecaprenyl diphosphate + H(+). The protein operates within cell wall biogenesis; peptidoglycan biosynthesis. Its function is as follows. Peptidoglycan polymerase that is essential for cell division. The chain is Probable peptidoglycan glycosyltransferase FtsW from Halomonas elongata (strain ATCC 33173 / DSM 2581 / NBRC 15536 / NCIMB 2198 / 1H9).